Reading from the N-terminus, the 322-residue chain is Aspartate--ammonia ligase (322 aa).

The protein belongs to the class-II aminoacyl-tRNA synthetase family. AsnA subfamily.

The protein resides in the cytoplasm. The catalysed reaction is L-aspartate + NH4(+) + ATP = L-asparagine + AMP + diphosphate + H(+). The protein operates within amino-acid biosynthesis; L-asparagine biosynthesis; L-asparagine from L-aspartate (ammonia route): step 1/1. This is Aspartate--ammonia ligase from Lactiplantibacillus plantarum (strain ATCC BAA-793 / NCIMB 8826 / WCFS1) (Lactobacillus plantarum).